A 530-amino-acid chain; its full sequence is Hyccin 2 (530 aa).

Residues Thr-30 and Thr-306 each carry the phosphothreonine modification. A phosphoserine mark is found at Ser-321 and Ser-341. The tract at residues 328 to 410 is disordered; that stretch reads RREGAEGVNG…DSVVRKQYVQ (83 aa). Positions 353–373 are enriched in polar residues; the sequence is SGASLSSQPIGTKPSSSSQRG. Phosphoserine occurs at positions 430, 442, 444, and 491. Positions 498–530 are disordered; that stretch reads GQAGEGKELLSPGAPLTKQSRSPSFNMQLISQV. The span at 514 to 530 shows a compositional bias: polar residues; that stretch reads TKQSRSPSFNMQLISQV.

It belongs to the Hyccin family. Component of a phosphatidylinositol 4-kinase (PI4K) complex, composed of PI4KA, EFR3 (EFR3A or EFR3B), TTC7 (TTC7A or TTC7B) and HYCC (HYCC1 or HYCC2).

The protein localises to the cytoplasm. Its subcellular location is the cytosol. It localises to the cell membrane. Its function is as follows. Component of a complex required to localize phosphatidylinositol 4-kinase (PI4K) to the plasma membrane. The protein is Hyccin 2 (HYCC2) of Pongo abelii (Sumatran orangutan).